The chain runs to 451 residues: Phosphoglucosamine mutase (451 aa).

Ser-103 functions as the Phosphoserine intermediate in the catalytic mechanism. Positions 103, 243, 245, and 247 each coordinate Mg(2+). Ser-103 is subject to Phosphoserine.

Belongs to the phosphohexose mutase family. Requires Mg(2+) as cofactor. In terms of processing, activated by phosphorylation.

It carries out the reaction alpha-D-glucosamine 1-phosphate = D-glucosamine 6-phosphate. In terms of biological role, catalyzes the conversion of glucosamine-6-phosphate to glucosamine-1-phosphate. The chain is Phosphoglucosamine mutase from Lactobacillus gasseri (strain ATCC 33323 / DSM 20243 / BCRC 14619 / CIP 102991 / JCM 1131 / KCTC 3163 / NCIMB 11718 / NCTC 13722 / AM63).